Consider the following 563-residue polypeptide: Phosphomethylpyrimidine synthase (563 aa).

Residues N180, M209, Y238, H274, 294–296 (SRG), 335–338 (DGLR), and E374 contribute to the substrate site. H378 contributes to the Zn(2+) binding site. Y401 lines the substrate pocket. H442 provides a ligand contact to Zn(2+). Positions 522, 525, and 530 each coordinate [4Fe-4S] cluster.

It belongs to the ThiC family. Requires [4Fe-4S] cluster as cofactor.

It catalyses the reaction 5-amino-1-(5-phospho-beta-D-ribosyl)imidazole + S-adenosyl-L-methionine = 4-amino-2-methyl-5-(phosphooxymethyl)pyrimidine + CO + 5'-deoxyadenosine + formate + L-methionine + 3 H(+). It participates in cofactor biosynthesis; thiamine diphosphate biosynthesis. Catalyzes the synthesis of the hydroxymethylpyrimidine phosphate (HMP-P) moiety of thiamine from aminoimidazole ribotide (AIR) in a radical S-adenosyl-L-methionine (SAM)-dependent reaction. This chain is Phosphomethylpyrimidine synthase, found in Geobacillus thermodenitrificans (strain NG80-2).